The sequence spans 250 residues: Triosephosphate isomerase (250 aa).

Residue Asn-8–Lys-10 participates in substrate binding. Residue His-96 is the Electrophile of the active site. Glu-169 (proton acceptor) is an active-site residue. Residues Gly-175, Ser-214, and Gly-235–Gly-236 contribute to the substrate site.

The protein belongs to the triosephosphate isomerase family. In terms of assembly, homodimer.

It is found in the cytoplasm. It carries out the reaction D-glyceraldehyde 3-phosphate = dihydroxyacetone phosphate. It functions in the pathway carbohydrate biosynthesis; gluconeogenesis. Its pathway is carbohydrate degradation; glycolysis; D-glyceraldehyde 3-phosphate from glycerone phosphate: step 1/1. Functionally, involved in the gluconeogenesis. Catalyzes stereospecifically the conversion of dihydroxyacetone phosphate (DHAP) to D-glyceraldehyde-3-phosphate (G3P). The sequence is that of Triosephosphate isomerase from Oleidesulfovibrio alaskensis (strain ATCC BAA-1058 / DSM 17464 / G20) (Desulfovibrio alaskensis).